A 631-amino-acid chain; its full sequence is Polyadenylate-binding protein, cytoplasmic and nuclear (631 aa).

A disordered region spans residues Met1–Ala56. 4 consecutive RRM domains span residues Ala58–Arg136, Gly146–Ser223, Thr239–Lys316, and Val342–Arg419. The interval Gly518–Pro545 is disordered. In terms of domain architecture, PABC spans Pro545 to Lys626.

The protein belongs to the polyadenylate-binding protein type-1 family.

Its subcellular location is the cytoplasm. It is found in the nucleus. Binds the poly(A) tail of mRNA. Appears to be an important mediator of the multiple roles of the poly(A) tail in mRNA biogenesis, stability and translation. In the nucleus, involved in both mRNA cleavage and polyadenylation. Is also required for efficient mRNA export to the cytoplasm. Acts in concert with a poly(A)-specific nuclease (PAN) to affect poly(A) tail shortening, which may occur concomitantly with either nucleocytoplasmic mRNA transport or translational initiation. In the cytoplasm, stimulates translation initiation and regulates mRNA decay through translation termination-coupled poly(A) shortening, probably mediated by PAN. In Meyerozyma guilliermondii (strain ATCC 6260 / CBS 566 / DSM 6381 / JCM 1539 / NBRC 10279 / NRRL Y-324) (Yeast), this protein is Polyadenylate-binding protein, cytoplasmic and nuclear (PAB1).